The sequence spans 498 residues: Cytoskeletal signaling protein slm1 (498 aa).

The tract at residues 1–23 (MELSGKSEFPTRTEIPNQASNGD) is disordered. Residues S175 and S312 each carry the phosphoserine modification. The 106-residue stretch at 300 to 405 (VPIMAGYLIR…WWEALNTHIA (106 aa)) folds into the PH domain. The segment at 416 to 475 (ANGPSAVSDSDDDDDDPNDFRPAVERQSSTMNTRMSQPSSAVNTNRSYGSEQIPSYADSQ) is disordered. The segment covering 441–475 (RQSSTMNTRMSQPSSAVNTNRSYGSEQIPSYADSQ) has biased composition (polar residues).

It localises to the cell tip. Functionally, effector of the TORC2- and calcineurin-signaling pathways. Mediates actin polarization via inhibition of calcineurin-dependent transcription. May play a role in the response to the disruption of sphingolipid synthesis, where dephosphorylation of slm1 leads to the activation and phosphorylation of ypk1 through the TORC2 and PKH1 pathways, which in turn phosphorylates orm1 and lag1 to activate sphingolipid synthesis. In Schizosaccharomyces pombe (strain 972 / ATCC 24843) (Fission yeast), this protein is Cytoskeletal signaling protein slm1 (slm1).